We begin with the raw amino-acid sequence, 284 residues long: Four and a half LIM domains protein 5 (284 aa).

A C4-type zinc finger spans residues 8-32 (CQYCTASLLGKKYVLKDDSPYCVTC). LIM zinc-binding domains follow at residues 39–100 (NYCE…ECSS), 101–160 (KCFH…KEFA), 161–220 (HYCN…LYAN), and 223–283 (VACS…MDTD).

In terms of assembly, interacts with CREM (via the third LIM domain). Interacts (via second LIM domain) with SPAG8. Testis-specific (at protein level).

Its subcellular location is the nucleus. May be involved in the regulation of spermatogenesis. Stimulates CREM transcriptional activity in a phosphorylation-independent manner. The sequence is that of Four and a half LIM domains protein 5 (FHL5) from Homo sapiens (Human).